Consider the following 191-residue polypeptide: Large ribosomal subunit protein uL3 (191 aa).

The tract at residues 115–137 is disordered; it reads GGPASHGSRFHRRHGSIGNREWP.

This sequence belongs to the universal ribosomal protein uL3 family. In terms of assembly, part of the 50S ribosomal subunit. Forms a cluster with proteins L14 and L19.

One of the primary rRNA binding proteins, it binds directly near the 3'-end of the 23S rRNA, where it nucleates assembly of the 50S subunit. This is Large ribosomal subunit protein uL3 (rplC) from Campylobacter jejuni subsp. jejuni serotype O:2 (strain ATCC 700819 / NCTC 11168).